Reading from the N-terminus, the 939-residue chain is Aconitate hydratase A (939 aa).

The interval 433–453 (GSGESLATGAEGRPSKPVTVA) is disordered. Residues Cys475, Cys541, and Cys544 each coordinate [4Fe-4S] cluster.

It belongs to the aconitase/IPM isomerase family. Monomer. The cofactor is [4Fe-4S] cluster.

The catalysed reaction is citrate = D-threo-isocitrate. It carries out the reaction (2S,3R)-3-hydroxybutane-1,2,3-tricarboxylate = 2-methyl-cis-aconitate + H2O. Its pathway is carbohydrate metabolism; tricarboxylic acid cycle; isocitrate from oxaloacetate: step 2/2. The protein operates within organic acid metabolism; propanoate degradation. Functionally, involved in the catabolism of short chain fatty acids (SCFA) via the tricarboxylic acid (TCA)(acetyl degradation route) and probably via the 2-methylcitrate cycle I (propionate degradation route). Catalyzes the reversible isomerization of citrate to isocitrate via cis-aconitate. Could catalyze the hydration of 2-methyl-cis-aconitate to yield (2R,3S)-2-methylisocitrate. The apo form of AcnA functions as a RNA-binding regulatory protein. In Corynebacterium glutamicum (strain ATCC 13032 / DSM 20300 / JCM 1318 / BCRC 11384 / CCUG 27702 / LMG 3730 / NBRC 12168 / NCIMB 10025 / NRRL B-2784 / 534), this protein is Aconitate hydratase A (acn).